Here is a 345-residue protein sequence, read N- to C-terminus: tRNA N6-adenosine threonylcarbamoyltransferase (345 aa).

The Fe cation site is built by histidine 111 and histidine 115. Substrate contacts are provided by residues 136-140 (LVSGG), aspartate 169, glycine 182, and asparagine 279. Aspartate 307 provides a ligand contact to Fe cation.

The protein belongs to the KAE1 / TsaD family. The cofactor is Fe(2+).

The protein resides in the cytoplasm. The enzyme catalyses L-threonylcarbamoyladenylate + adenosine(37) in tRNA = N(6)-L-threonylcarbamoyladenosine(37) in tRNA + AMP + H(+). In terms of biological role, required for the formation of a threonylcarbamoyl group on adenosine at position 37 (t(6)A37) in tRNAs that read codons beginning with adenine. Is involved in the transfer of the threonylcarbamoyl moiety of threonylcarbamoyl-AMP (TC-AMP) to the N6 group of A37, together with TsaE and TsaB. TsaD likely plays a direct catalytic role in this reaction. In Actinobacillus succinogenes (strain ATCC 55618 / DSM 22257 / CCUG 43843 / 130Z), this protein is tRNA N6-adenosine threonylcarbamoyltransferase.